We begin with the raw amino-acid sequence, 1140 residues long: Kinesin-like protein KIN-14O (1140 aa).

Residues 1 to 12 (MLESEFQREHAF) are compositionally biased toward basic and acidic residues. 4 disordered regions span residues 1–37 (MLES…ADDD), 50–81 (NPAE…DEDS), 161–217 (SPGS…GGHK), and 323–347 (ASGT…KEED). Residues 161-179 (SPGSSHGGSTPRSPFSPSS) show a composition bias toward low complexity. Over residues 180 to 193 (PRERHNKGLADSRF) the composition is skewed to basic and acidic residues. The segment covering 197–209 (LPNSSALDPSSPG) has biased composition (polar residues). Residues 327–546 (SEENETEKSK…KAKEMEEKSE (220 aa)) adopt a coiled-coil conformation. The segment covering 332-347 (TEKSKLEEKKKDKEED) has biased composition (basic and acidic residues). A Kinesin motor domain is found at 632–952 (NIRVYCRVRP…LKFAERVSGV (321 aa)). 716–723 (GQTGSGKT) serves as a coordination point for ATP. The span at 1002–1018 (LGQSDDFNSEAGDSQLS) shows a compositional bias: polar residues. Disordered stretches follow at residues 1002-1021 (LGQS…SIED) and 1028-1140 (DYTR…KRWS). Positions 1066–1078 (EGRKPLKISDKPK) are enriched in basic and acidic residues. Positions 1099 to 1130 (TMRTTNIAKATSALLSPSSQGMKKTGSASNFL) are enriched in polar residues.

The protein belongs to the TRAFAC class myosin-kinesin ATPase superfamily. Kinesin family. KIN-14 subfamily.

The chain is Kinesin-like protein KIN-14O from Arabidopsis thaliana (Mouse-ear cress).